The primary structure comprises 174 residues: Secretion monitor (174 aa).

Residues 1–35 (MGILNLWRQFGRRYFWSHLLLGVVAASIGAPTILA) form the signal peptide.

This sequence belongs to the SecM family.

The protein localises to the cytoplasm. It localises to the cytosol. It is found in the periplasm. Its function is as follows. Regulates secA expression by translational coupling of the secM secA operon. Translational pausing at a specific Pro residue 5 residues before the end of the protein may allow disruption of a mRNA repressor helix that normally suppresses secA translation initiation. The polypeptide is Secretion monitor (Photorhabdus laumondii subsp. laumondii (strain DSM 15139 / CIP 105565 / TT01) (Photorhabdus luminescens subsp. laumondii)).